Here is a 130-residue protein sequence, read N- to C-terminus: Small ribosomal subunit protein uS11 (130 aa).

Belongs to the universal ribosomal protein uS11 family. In terms of assembly, part of the 30S ribosomal subunit. Interacts with proteins S7 and S18. Binds to IF-3.

Located on the platform of the 30S subunit, it bridges several disparate RNA helices of the 16S rRNA. Forms part of the Shine-Dalgarno cleft in the 70S ribosome. The polypeptide is Small ribosomal subunit protein uS11 (Shewanella denitrificans (strain OS217 / ATCC BAA-1090 / DSM 15013)).